Reading from the N-terminus, the 325-residue chain is L-lactate dehydrogenase (325 aa).

Residues V19, D40, K45, Y70, and 84–85 (GA) contribute to the NAD(+) site. Positions 87 and 93 each coordinate substrate. Residues T106, 123 to 125 (AAN), and S148 contribute to the NAD(+) site. Residue 125–128 (NPVD) participates in substrate binding. 153 to 156 (DSAR) lines the substrate pocket. R158 and H173 together coordinate beta-D-fructose 1,6-bisphosphate. Catalysis depends on H180, which acts as the Proton acceptor. Phosphotyrosine is present on Y225. T234 is a binding site for substrate.

It belongs to the LDH/MDH superfamily. LDH family. In terms of assembly, homotetramer.

It localises to the cytoplasm. The enzyme catalyses (S)-lactate + NAD(+) = pyruvate + NADH + H(+). It participates in fermentation; pyruvate fermentation to lactate; (S)-lactate from pyruvate: step 1/1. Allosterically activated by fructose 1,6-bisphosphate (FBP). Its function is as follows. Catalyzes the conversion of lactate to pyruvate. This chain is L-lactate dehydrogenase, found in Latilactobacillus sakei (Lactobacillus sakei).